Here is a 446-residue protein sequence, read N- to C-terminus: Branched-chain amino acid permease BrnQ (446 aa).

12 consecutive transmembrane segments (helical) span residues 13–33 (ISSM…PAYL), 41–61 (LWIS…LAIA), 81–101 (KYSY…FAIP), 120–140 (MAKS…MLFF), 154–174 (FLTP…LLHP), 196–216 (VLAG…IIVI), 237–257 (TGVL…LVGA), 285–305 (GAVI…IGLI), 325–345 (WAII…TTII), 347–367 (FSLP…LLAL), 381–401 (IMTA…LPAG), and 421–441 (GLGW…KGVI).

The protein belongs to the branched chain amino acid transporter family.

The protein localises to the cell membrane. Leucine uptake is inhibited by the proton ionophore carbonyl cyanide m-chlorophenylhydrazone (CCCP). Branched chain amino acid transport system which is involved in the uptake of leucine, valine and isoleucine. The proton motive force is probably the driving force for transport. This chain is Branched-chain amino acid permease BrnQ, found in Lactobacillus delbrueckii subsp. lactis.